Here is a 374-residue protein sequence, read N- to C-terminus: DNA replication and repair protein RecF (374 aa).

30–37 (GENAQGKT) is a binding site for ATP.

Belongs to the RecF family.

It is found in the cytoplasm. Its function is as follows. The RecF protein is involved in DNA metabolism; it is required for DNA replication and normal SOS inducibility. RecF binds preferentially to single-stranded, linear DNA. It also seems to bind ATP. This is DNA replication and repair protein RecF from Geobacillus sp. (strain WCH70).